The chain runs to 706 residues: Polyribonucleotide nucleotidyltransferase (706 aa).

Residues D486 and D492 each coordinate Mg(2+). In terms of domain architecture, KH spans P553 to I612. An S1 motif domain is found at G622–K690.

The protein belongs to the polyribonucleotide nucleotidyltransferase family. Component of the RNA degradosome, which is a multiprotein complex involved in RNA processing and mRNA degradation. Mg(2+) is required as a cofactor.

The protein resides in the cytoplasm. It carries out the reaction RNA(n+1) + phosphate = RNA(n) + a ribonucleoside 5'-diphosphate. Functionally, involved in mRNA degradation. Catalyzes the phosphorolysis of single-stranded polyribonucleotides processively in the 3'- to 5'-direction. The chain is Polyribonucleotide nucleotidyltransferase from Pectobacterium atrosepticum (strain SCRI 1043 / ATCC BAA-672) (Erwinia carotovora subsp. atroseptica).